The following is a 320-amino-acid chain: Serpentine receptor class gamma-17 (320 aa).

6 helical membrane passes run 25–45, 80–100, 155–175, 192–212, 237–257, and 268–288; these read AIYF…ISLL, IFFG…STFF, FIML…QVIA, WASL…FTIV, FTSI…LTFA, and YILQ…IMFL.

It belongs to the nematode receptor-like protein srg family.

The protein localises to the membrane. This Caenorhabditis elegans protein is Serpentine receptor class gamma-17 (srg-17).